Consider the following 49-residue polypeptide: Feruloyl esterase A (49 aa).

Belongs to the AB hydrolase superfamily. FaeA family.

The protein localises to the secreted. It catalyses the reaction feruloyl-polysaccharide + H2O = ferulate + polysaccharide.. In terms of biological role, involved in degradation of plant cell walls. Hydrolyzes the feruloyl-arabinose ester bond in arabinoxylans as well as the feruloyl-galactose and feruloyl-arabinose ester bonds in pectin. Active against methyl esters of sinapate (MSA), but not caffeate (MCA). In Talaromyces stipitatus (strain ATCC 10500 / CBS 375.48 / QM 6759 / NRRL 1006) (Penicillium stipitatum), this protein is Feruloyl esterase A.